A 122-amino-acid chain; its full sequence is Basic phospholipase A2 F15 (122 aa).

Intrachain disulfides connect Cys-26–Cys-115, Cys-28–Cys-44, Cys-43–Cys-95, Cys-49–Cys-122, Cys-50–Cys-88, Cys-57–Cys-81, and Cys-75–Cys-86. Ca(2+)-binding residues include Tyr-27, Gly-29, and Gly-31. The active site involves His-47. Asp-48 serves as a coordination point for Ca(2+). Asp-89 is an active-site residue.

It belongs to the phospholipase A2 family. Group II subfamily. D49 sub-subfamily. In terms of assembly, when this protein is associated with crotapotin (F5 or F7), it forms the crotoxin protein. It depends on Ca(2+) as a cofactor. Expressed by the venom gland.

The protein localises to the secreted. The catalysed reaction is a 1,2-diacyl-sn-glycero-3-phosphocholine + H2O = a 1-acyl-sn-glycero-3-phosphocholine + a fatty acid + H(+). Activated by heparin. Inhibited by its chaperone crotapotin. In terms of biological role, snake venom phospholipase A2 (PLA2) that shows moderate neurotoxic activity in isolated mouse phrenic nerve diaphragm but shows high neurotoxic activity in a chick biventer cervis preparation. Also shows a high bactericidal effect against both Gram-negative and Gram-positive bacteria. PLA2 catalyzes the calcium-dependent hydrolysis of the 2-acyl groups in 3-sn-phosphoglycerides. In Crotalus durissus terrificus (South American rattlesnake), this protein is Basic phospholipase A2 F15.